A 91-amino-acid polypeptide reads, in one-letter code: Small ribosomal subunit protein uS19 (91 aa).

This sequence belongs to the universal ribosomal protein uS19 family.

In terms of biological role, protein S19 forms a complex with S13 that binds strongly to the 16S ribosomal RNA. The chain is Small ribosomal subunit protein uS19 from Bordetella avium (strain 197N).